The following is an 88-amino-acid chain: MALKERVGTVVSDKMDKTVVVAVENRFPHPIYQKTVSRTTRYKAHDENNSVRVGDRVRITETRPLSRHKRWAVAEVLSHSPKAEEAKK.

Belongs to the universal ribosomal protein uS17 family. Part of the 30S ribosomal subunit.

In terms of biological role, one of the primary rRNA binding proteins, it binds specifically to the 5'-end of 16S ribosomal RNA. This chain is Small ribosomal subunit protein uS17, found in Synechococcus sp. (strain WH7803).